Consider the following 185-residue polypeptide: Ribosome-recycling factor (185 aa).

Positions 127-158 are disordered; it reads AVRNTRQDANNKVKKLEKDKEISEDESKKAQE.

This sequence belongs to the RRF family.

The protein localises to the cytoplasm. Functionally, responsible for the release of ribosomes from messenger RNA at the termination of protein biosynthesis. May increase the efficiency of translation by recycling ribosomes from one round of translation to another. This Helicobacter pylori (strain G27) protein is Ribosome-recycling factor.